A 143-amino-acid polypeptide reads, in one-letter code: MESSGFLRWGKVFAAGGSIILTGVLLFKYTTPTDEQLLQALSPELRLQYERERNLRQAEQQELMKVVQQTMKSKDPIWKTGTVDSPWERNGTQATKDQFQRLKADQVQKEELERIRQELDKIRMESLDQTDMIVSKKSWWSLW.

Residues 5 to 27 (GFLRWGKVFAAGGSIILTGVLLF) form a helical membrane-spanning segment. Positions 99 to 131 (FQRLKADQVQKEELERIRQELDKIRMESLDQTD) form a coiled coil.

This sequence belongs to the CBP4 family.

Its subcellular location is the mitochondrion inner membrane. Functionally, essential for the assembly of ubiquinol-cytochrome c reductase. It has a direct effect on the correct occurrence of the Rieske protein, core 4, core 5 and apocytochrome b. The polypeptide is Assembly factor CBP4 (CBP4) (Kluyveromyces lactis (strain ATCC 8585 / CBS 2359 / DSM 70799 / NBRC 1267 / NRRL Y-1140 / WM37) (Yeast)).